The following is a 547-amino-acid chain: Sterol carrier protein 2 (547 aa).

Residue Ser-3 is modified to Phosphoserine. Position 132 is an N6-acetyllysine; alternate (Lys-132). Lys-132 bears the N6-succinyllysine; alternate mark. At Lys-168 the chain carries N6-succinyllysine. 2 positions are modified to N6-acetyllysine: Lys-173 and Lys-177. N6-acetyllysine; alternate is present on Lys-183. Lys-183 bears the N6-succinyllysine; alternate mark. Lys-282 is subject to N6-succinyllysine. An N6-acetyllysine; alternate mark is found at Lys-341, Lys-432, Lys-438, Lys-443, and Lys-453. N6-succinyllysine; alternate occurs at positions 341, 432, 438, 443, and 453. An SCP2 domain is found at 433–543 (ANLVFKEIEK…KLQNLQLQPG (111 aa)). Lys-464 is subject to N6-succinyllysine. Lys-470 bears the N6-acetyllysine; alternate mark. N6-succinyllysine; alternate is present on Lys-470. N6-succinyllysine is present on Lys-479. Lys-491 bears the N6-acetyllysine mark. N6-succinyllysine occurs at positions 492 and 511. Ser-516 is modified (phosphoserine). Lys-522 and Lys-534 each carry N6-succinyllysine. The Microbody targeting signal motif lies at 545-547 (AKL).

In the N-terminal section; belongs to the thiolase-like superfamily. Thiolase family. Interacts with PEX5; the interaction is essential for peroxisomal import. In terms of processing, preSCP2, a protein with a molecular mass of about 15 kDa, is processed into its mature form (SCP2) by proteolytic cleavage of a 20 residue leader sequence after translocation into peroxisomes. As to expression, liver, fibroblasts, and placenta.

The protein resides in the peroxisome. Its subcellular location is the cytoplasm. The protein localises to the mitochondrion. It localises to the endoplasmic reticulum. It carries out the reaction choloyl-CoA + propanoyl-CoA = 3alpha,7alpha,12alpha-trihydroxy-24-oxo-5beta-cholestan-26-oyl-CoA + CoA. The catalysed reaction is 4,8,12-trimethyltridecanoyl-CoA + propanoyl-CoA = 3-oxopristanoyl-CoA + CoA. It catalyses the reaction an acyl-CoA + acetyl-CoA = a 3-oxoacyl-CoA + CoA. The enzyme catalyses hexanoyl-CoA + acetyl-CoA = 3-oxooctanoyl-CoA + CoA. It carries out the reaction tetradecanoyl-CoA + acetyl-CoA = 3-oxohexadecanoyl-CoA + CoA. The catalysed reaction is 3-oxohexadecanedioyl-CoA + CoA = tetradecanedioyl-CoA + acetyl-CoA. It catalyses the reaction propanoyl-CoA + tetradecanoyl-CoA = 3-oxo-2-methylhexadecanoyl-CoA + CoA. The enzyme catalyses butanoyl-CoA + acetyl-CoA = 3-oxohexanoyl-CoA + CoA. It carries out the reaction octanoyl-CoA + acetyl-CoA = 3-oxodecanoyl-CoA + CoA. The catalysed reaction is decanoyl-CoA + acetyl-CoA = 3-oxododecanoyl-CoA + CoA. It catalyses the reaction dodecanoyl-CoA + acetyl-CoA = 3-oxotetradecanoyl-CoA + CoA. The enzyme catalyses hexadecanoyl-CoA + acetyl-CoA = 3-oxooctadecanoyl-CoA + CoA. It carries out the reaction 3-oxo-(9Z-octadecenoyl)-CoA + CoA = (7Z)-hexadecenoyl-CoA + acetyl-CoA. The catalysed reaction is 7-dehydrocholesterol(in) = 7-dehydrocholesterol(out). Functionally, plays a crucial role in the peroxisomal oxidation of branched-chain fatty acids. Catalyzes the last step of the peroxisomal beta-oxidation of branched chain fatty acids and the side chain of the bile acid intermediates di- and trihydroxycoprostanic acids (DHCA and THCA). Also active with medium and long straight chain 3-oxoacyl-CoAs. Stimulates the microsomal conversion of 7-dehydrocholesterol to cholesterol and transfers phosphatidylcholine and 7-dehydrocholesterol between membrances, in vitro. Isoforms SCP2 and SCPx cooperate in peroxisomal oxidation of certain naturally occurring tetramethyl-branched fatty acyl-CoAs. In terms of biological role, mediates the transfer of all common phospholipids, cholesterol and gangliosides from the endoplasmic reticulum to the plasma membrane. May play a role in regulating steroidogenesis. Stimulates the microsomal conversion of 7-dehydrocholesterol to cholesterol. Also binds fatty acids and fatty acyl Coenzyme A (CoA) such as phytanoyl-CoA. Involved in the regulation phospholipid synthesis in endoplasmic reticulum enhancing the incorporation of exogenous fatty acid into glycerides. Seems to stimulate the rate-limiting step in phosphatidic acid formation mediated by GPAT3. Isoforms SCP2 and SCPx cooperate in peroxisomal oxidation of certain naturally occurring tetramethyl-branched fatty acyl-CoAs. This Homo sapiens (Human) protein is Sterol carrier protein 2.